A 396-amino-acid polypeptide reads, in one-letter code: NADH-quinone oxidoreductase subunit D 1 (396 aa).

Belongs to the complex I 49 kDa subunit family. In terms of assembly, NDH-1 is composed of 14 different subunits. Subunits NuoB, C, D, E, F, and G constitute the peripheral sector of the complex.

It localises to the cell inner membrane. The enzyme catalyses a quinone + NADH + 5 H(+)(in) = a quinol + NAD(+) + 4 H(+)(out). Functionally, NDH-1 shuttles electrons from NADH, via FMN and iron-sulfur (Fe-S) centers, to quinones in the respiratory chain. The immediate electron acceptor for the enzyme in this species is believed to be ubiquinone. Couples the redox reaction to proton translocation (for every two electrons transferred, four hydrogen ions are translocated across the cytoplasmic membrane), and thus conserves the redox energy in a proton gradient. The sequence is that of NADH-quinone oxidoreductase subunit D 1 from Rhizobium meliloti (strain 1021) (Ensifer meliloti).